A 361-amino-acid polypeptide reads, in one-letter code: 3-dehydroquinate synthase (361 aa).

Residues 71–76 (DGEQNK), 105–109 (GVIGD), 129–130 (TT), Lys-142, Lys-151, and 169–172 (CLNT) each bind NAD(+). Positions 184, 247, and 264 each coordinate Zn(2+).

This sequence belongs to the sugar phosphate cyclases superfamily. Dehydroquinate synthase family. The cofactor is Co(2+). Zn(2+) serves as cofactor. It depends on NAD(+) as a cofactor.

It localises to the cytoplasm. The enzyme catalyses 7-phospho-2-dehydro-3-deoxy-D-arabino-heptonate = 3-dehydroquinate + phosphate. It functions in the pathway metabolic intermediate biosynthesis; chorismate biosynthesis; chorismate from D-erythrose 4-phosphate and phosphoenolpyruvate: step 2/7. Functionally, catalyzes the conversion of 3-deoxy-D-arabino-heptulosonate 7-phosphate (DAHP) to dehydroquinate (DHQ). This Sodalis glossinidius (strain morsitans) protein is 3-dehydroquinate synthase.